A 512-amino-acid chain; its full sequence is Protein male-specific lethal-3 (512 aa).

The 80-residue stretch at 11–90 folds into the Chromo domain; the sequence is FHKGEIVLCY…QLQRELAEAA (80 aa). Positions 98–175 are disordered; the sequence is YSYKGTPDKP…DGRLKGNRGR (78 aa). A compositionally biased stretch (basic and acidic residues) spans 149–169; that stretch reads RTRDNSGGKRKEKPPSGDGRL. In terms of domain architecture, MRG spans 196 to 500; it reads QEDRIMMRVS…STALPQEDLQ (305 aa).

As to quaternary structure, component of the male-specific lethal (MSL) histone acetyltransferase complex, composed of mof, mle, msl-1, msl-2 and msl-3 proteins, as well as roX1 and roX2 non-coding RNAs. Component of a maternal MSL subcomplex composed of mof, msl-1 and msl-3. In terms of processing, ubiquitinated by msl-2.

It localises to the nucleus. It is found in the chromosome. Component of the male-specific lethal (MSL) histone acetyltransferase complex, a multiprotein complex essential for elevating transcription of the single X chromosome in the male (X chromosome dosage compensation). The MSL complex specifically associates with the single X chromosome in males and mediates formation of H4K16ac, promoting a two-fold activation of X chromosome. Acts as a histone reader that specifically recognizes and binds histone H3 trimethylated at 'Lys-36' (H3K36me3) and histone H4 monomethylated at 'Lys-20' (H4K20me1). Within the MSL complex, mediates the spreading of the MSL complex from initiation sites on the male X chromosome to flanking chromatin. Following initial recruitment of the MSL complex to male X chromosome by msl-2, msl-3 binds H3K36me3 and promotes spreading of the MSL complex in cis. In addition to its role in dosage compensation in males, promotes germline stem cell differentiation in females: recognizes and binds H3K36me3, promoting recruitment of the ATAC complex and transcription of genes, such as RpS19b. The chain is Protein male-specific lethal-3 from Drosophila melanogaster (Fruit fly).